The following is a 2494-amino-acid chain: Nuclear receptor corepressor 1 (2494 aa).

Polar residues predominate over residues 1-33 (MSSSGYPPNQGAFSTEQGRYSSHPVQYTFPSSR). Disordered stretches follow at residues 1 to 38 (MSSS…QQEF), 53 to 106 (LLQQ…PRLD), 134 to 170 (SEVK…KLSK), and 198 to 222 (QQQL…PVEQ). The segment covering 71–82 (PVSDRPQDRRQG) has biased composition (basic and acidic residues). Polar residues predominate over residues 83-92 (YEQQYHSVTQ). Composition is skewed to basic and acidic residues over residues 93–106 (NEHE…PRLD), 134–148 (SEVK…KHET), and 204–213 (EAAKPPEPEK). Residues 154–304 (SGQPGEEQEA…REQNICQRYD (151 aa)) form an interaction with tbl1xr1 region. The stretch at 168–208 (LSKEELIQSMDRVDREIAKVEQQILKLKKKQQQLEEEAAKP) forms a coiled coil. The region spanning 427–478 (QFMNVWTDHEKEIFKEKFVQHPKNFGLIASYLERKTVSDCVLYYYLTKKNEN) is the SANT 1 domain. Disordered regions lie at residues 488 to 638 (PKRR…VEHG), 671 to 913 (NLLQ…LDSK), 981 to 1007 (RQRQ…PNMD), 1081 to 1124 (GARL…GTPG), 1413 to 1434 (IHEI…ESSR), 1488 to 1585 (MGER…TQRE), 1745 to 1845 (LAFP…QESI), and 1912 to 1987 (EVVK…AHTK). Composition is skewed to basic and acidic residues over residues 502 to 525 (AQEE…KEEE) and 535 to 548 (KEEL…RTDA). Residues 502 to 549 (AQEEKEIEKVEEEKAERNDKKEEERREEEEKEEKEELRDGTKDRTDAI) adopt a coiled-coil conformation. A compositionally biased stretch (low complexity) spans 582–616 (ASEAAAAANAASTATTAPATTTSTTATTTTAALVP). Residues 617–629 (VAPPPEEPTPPPT) show a composition bias toward pro residues. The 47-residue stretch at 622–668 (EEPTPPPTQEQSLVEHGRNWGAIAKMVGSKSESQCKNFYFNYKRRHN) folds into the SANT 2 domain. Polar residues predominate over residues 692 to 702 (QCESVASTVSA). A coiled-coil region spans residues 698 to 726 (STVSAQEDEENEASNEEENAEDSEGAENS). The segment covering 703 to 722 (QEDEENEASNEEENAEDSEG) has biased composition (acidic residues). Residues 723 to 741 (AENSSDTESAPSPSPAEAA) show a composition bias toward low complexity. The segment covering 766–779 (ASKSVSDSSPTPTV) has biased composition (polar residues). Over residues 829–864 (AEPDEVESKPSESAEVKIEEDTKDQDMERLMDRAEA) the composition is skewed to basic and acidic residues. Composition is skewed to polar residues over residues 881-892 (ESQSDNDSSATC), 993-1004 (MSASPGNMSKSP), and 1104-1124 (ATSS…GTPG). The segment covering 1488-1504 (MGERSKYEDTKSSEAIR) has biased composition (basic and acidic residues). Residues 1508–1519 (TSVVSSGPSVLR) are compositionally biased toward polar residues. Residues 1548–1561 (PSPMSRSSPMARSA) show a composition bias toward low complexity. A coiled-coil region spans residues 1771 to 1810 (VSAERERERERDRERDREREKEQRERERDRERERERLAAA). The segment covering 1773–1807 (AERERERERDRERDREREKEQRERERDRERERERL) has biased composition (basic and acidic residues). The span at 1835–1845 (PSPSVRAQESI) shows a compositional bias: polar residues. Basic and acidic residues predominate over residues 1914 to 1935 (VKPKEMKHDPARSEESLSRRNV). Residues 1953–1972 (QSPYTSSSFSGSKSQGQPSP) show a composition bias toward low complexity. Over residues 1978–1987 (AGKEKTAHTK) the composition is skewed to basic and acidic residues. The CORNR box 1 motif lies at 2008-2012 (IDVII). The tract at residues 2018 to 2105 (SDKDGRDRNS…PSPQQTIPGH (88 aa)) is disordered. The segment covering 2027 to 2036 (SQSSDSSSSH) has biased composition (low complexity). Over residues 2039-2048 (HRYDAPRDTI) the composition is skewed to basic and acidic residues. Over residues 2088–2102 (RYRQQQESPSPQQTI) the composition is skewed to polar residues. Positions 2119 to 2123 (ICQII) match the CORNR box 2 motif. The segment covering 2135–2177 (QALQQPPASTFQSTNPSSTPVRTKASSRFSPESQVQPVHNQRP) has biased composition (polar residues). The interval 2135-2216 (QALQQPPAST…YEPISPPQAP (82 aa)) is disordered. Basic and acidic residues predominate over residues 2186–2205 (VLDRPRGRPGKSPDRGHISE). Positions 2322 to 2326 (LEDII) match the CORNR box 3 motif. Disordered regions lie at residues 2346–2413 (GVAQ…SVHS) and 2446–2494 (MLNS…DSDE). Residues 2376-2390 (HKQKLISKYGSRKTK) are compositionally biased toward basic residues. 2 stretches are compositionally biased toward polar residues: residues 2446–2472 (MLNS…QQSR) and 2485–2494 (QYETLSDSDE).

Belongs to the N-CoR nuclear receptor corepressors family. As to quaternary structure, forms a large corepressor complex that contains sin3a/b, histone deacetylases hdac1 and hdac2, rbbp4 and possibly rbbp7. Interacts with the thyroid receptor (TR, composed of rxra and thrb) and the retinoid acid receptor (RAR, composed of rxra and rara) in the absence of ligand. Interacts with tbl1xr1. Interacts with zbtb33/kaiso.

It is found in the nucleus. Its function is as follows. Mediates transcriptional repression by certain nuclear receptors. Participates in complexes which promote histone deacetylation and the formation of repressive chromatin structures which may impede access by the basal transcription machinery. In association with hdac3, may play a role in the regulation of the circadian clock. The polypeptide is Nuclear receptor corepressor 1 (ncor1) (Xenopus tropicalis (Western clawed frog)).